A 219-amino-acid chain; its full sequence is Probable GTP-binding protein EngB (219 aa).

The EngB-type G domain maps to 26 to 200 (EGVEIAFAGR…RAKLDTWFAP (175 aa)). Residues 34–41 (GRSNAGKS), 61–65 (GRTQL), 79–82 (DLPG), 146–149 (TKAD), and 179–181 (FSS) each bind GTP. Mg(2+) is bound by residues serine 41 and threonine 63.

It belongs to the TRAFAC class TrmE-Era-EngA-EngB-Septin-like GTPase superfamily. EngB GTPase family. Mg(2+) serves as cofactor.

Functionally, necessary for normal cell division and for the maintenance of normal septation. This is Probable GTP-binding protein EngB from Vibrio parahaemolyticus serotype O3:K6 (strain RIMD 2210633).